The chain runs to 452 residues: Adenosylmethionine-8-amino-7-oxononanoate aminotransferase (452 aa).

116 to 117 (GS) is a binding site for pyridoxal 5'-phosphate. Tyrosine 152 is a binding site for substrate. Aspartate 257 contributes to the pyridoxal 5'-phosphate binding site. Substrate-binding residues include lysine 286, glycine 321, and arginine 414. Residue lysine 286 is modified to N6-(pyridoxal phosphate)lysine.

This sequence belongs to the class-III pyridoxal-phosphate-dependent aminotransferase family. BioA subfamily. Homodimer. It depends on pyridoxal 5'-phosphate as a cofactor.

The protein localises to the cytoplasm. It catalyses the reaction (8S)-8-amino-7-oxononanoate + S-adenosyl-L-methionine = S-adenosyl-4-methylsulfanyl-2-oxobutanoate + (7R,8S)-7,8-diammoniononanoate. The protein operates within cofactor biosynthesis; biotin biosynthesis; 7,8-diaminononanoate from 8-amino-7-oxononanoate (SAM route): step 1/1. Functionally, catalyzes the transfer of the alpha-amino group from S-adenosyl-L-methionine (SAM) to 7-keto-8-aminopelargonic acid (KAPA) to form 7,8-diaminopelargonic acid (DAPA). It is the only aminotransferase known to utilize SAM as an amino donor. The chain is Adenosylmethionine-8-amino-7-oxononanoate aminotransferase from Staphylococcus aureus (strain NCTC 8325 / PS 47).